A 492-amino-acid polypeptide reads, in one-letter code: Bifunctional purine biosynthesis protein PurH (492 aa).

The MGS-like domain occupies 1–144 (MKKAILSVSN…KNFKHVITVV (144 aa)).

The protein belongs to the PurH family.

The catalysed reaction is (6R)-10-formyltetrahydrofolate + 5-amino-1-(5-phospho-beta-D-ribosyl)imidazole-4-carboxamide = 5-formamido-1-(5-phospho-D-ribosyl)imidazole-4-carboxamide + (6S)-5,6,7,8-tetrahydrofolate. It catalyses the reaction IMP + H2O = 5-formamido-1-(5-phospho-D-ribosyl)imidazole-4-carboxamide. It functions in the pathway purine metabolism; IMP biosynthesis via de novo pathway; 5-formamido-1-(5-phospho-D-ribosyl)imidazole-4-carboxamide from 5-amino-1-(5-phospho-D-ribosyl)imidazole-4-carboxamide (10-formyl THF route): step 1/1. It participates in purine metabolism; IMP biosynthesis via de novo pathway; IMP from 5-formamido-1-(5-phospho-D-ribosyl)imidazole-4-carboxamide: step 1/1. In Staphylococcus saprophyticus subsp. saprophyticus (strain ATCC 15305 / DSM 20229 / NCIMB 8711 / NCTC 7292 / S-41), this protein is Bifunctional purine biosynthesis protein PurH.